Reading from the N-terminus, the 1019-residue chain is Limulus clotting factor C (1019 aa).

The first 25 residues, 1–25, serve as a signal peptide directing secretion; it reads MVLASFLVSGLVLGLLAQKMRPVQS. One can recognise an EGF-like domain in the interval 102–137; that stretch reads YGTWCSGECQCKNGGICDQRTGACACRDRYEGVHCE. Intrachain disulfides connect Cys-106–Cys-118, Cys-112–Cys-125, Cys-127–Cys-136, Cys-142–Cys-182, Cys-168–Cys-195, Cys-199–Cys-241, Cys-227–Cys-254, Cys-260–Cys-308, Cys-294–Cys-321, Cys-331–Cys-350, Cys-354–Cys-374, Cys-436–Cys-447, Cys-464–Cys-564, Cys-538–Cys-556, Cys-576–Cys-621, Cys-607–Cys-634, and Cys-720–Cys-748. Sushi domains are found at residues 140–197, 198–256, and 258–323; these read KGCP…KCIR, ECAM…QCKN, and VFCP…SCVK. Positions 325 to 421 constitute an LCCL domain; it reads ADREVDCDSK…EELKSLARSF (97 aa). A C-type lectin domain is found at 436 to 568; that stretch reads CPDGWFEVDE…PSSFACMMDL (133 aa). N-linked (GlcNAc...) asparagine glycans are attached at residues Asn-523 and Asn-534. 2 Sushi domains span residues 574 to 636 and 689 to 750; these read AKCD…RCIK and PRSS…SCIP. Residues Asn-624, Asn-740, and Asn-767 are each glycosylated (N-linked (GlcNAc...) asparagine). Residues 763 to 1019 form the Peptidase S1 domain; it reads IWNGNSTEIG…VFLSWIRQFI (257 aa). Cys-794 and Cys-810 form a disulfide bridge. Active-site charge relay system residues include His-809 and Asp-865. N-linked (GlcNAc...) asparagine glycosylation is present at Asn-912. Cys-932 and Cys-951 form a disulfide bridge. Residue Asp-960 coordinates substrate. An intrachain disulfide couples Cys-962 to Cys-996. The Charge relay system role is filled by Ser-966.

It belongs to the peptidase S1 family. As to quaternary structure, heterodimer of a light chain and a heavy chain linked by a disulfide bond.

Its subcellular location is the secreted. The enzyme catalyses Selective cleavage of 103-Arg-|-Ser-104 and 124-Ile-|-Ile-125 bonds in Limulus clotting factor B to form activated factor B. Cleavage of -Pro-Arg-|-Xaa- bonds in synthetic substrates.. With respect to regulation, activated by Gram-negative bacterial lipopolysaccharides and chymotrypsin. This enzyme is closely associated with an endotoxin-sensitive hemolymph coagulation system which may play important roles in both hemostasis and host defense mechanisms. Its active form catalyzes the activation of factor B. This is Limulus clotting factor C from Carcinoscorpius rotundicauda (Mangrove horseshoe crab).